Reading from the N-terminus, the 62-residue chain is Mu-conotoxin Lt5d (62 aa).

Residues 1–22 (MRCLPVFIILLLLIPSAPSVDA) form the signal peptide. Residues 23–48 (QPTTKDDVPLASLHDNAKRALQMFWN) constitute a propeptide that is removed on maturation.

This sequence belongs to the conotoxin T superfamily. Contains 2 disulfide bonds that can be either 'C1-C3, C2-C4' or 'C1-C4, C2-C3', since these disulfide connectivities have been observed for conotoxins with cysteine framework V (for examples, see AC P0DQQ7 and AC P81755). In terms of tissue distribution, expressed by the venom duct.

It is found in the secreted. Functionally, mu-conotoxins block voltage-gated sodium channels (Nav). This toxin inhibits tetrodotoxin(TTX)-sensitive sodium channels, but does not affect TTX-resistant sodium channels. Reduces the amplitude of currents without changing the activation and inactivation kinetics of currents. The protein is Mu-conotoxin Lt5d of Conus litteratus (Lettered cone).